A 156-amino-acid chain; its full sequence is ATP synthase subunit b (156 aa).

Residues 5–25 (LTLIVQMLVFAAFVLFTMKLV) form a helical membrane-spanning segment.

This sequence belongs to the ATPase B chain family. As to quaternary structure, F-type ATPases have 2 components, F(1) - the catalytic core - and F(0) - the membrane proton channel. F(1) has five subunits: alpha(3), beta(3), gamma(1), delta(1), epsilon(1). F(0) has three main subunits: a(1), b(2) and c(10-14). The alpha and beta chains form an alternating ring which encloses part of the gamma chain. F(1) is attached to F(0) by a central stalk formed by the gamma and epsilon chains, while a peripheral stalk is formed by the delta and b chains.

It localises to the cell inner membrane. F(1)F(0) ATP synthase produces ATP from ADP in the presence of a proton or sodium gradient. F-type ATPases consist of two structural domains, F(1) containing the extramembraneous catalytic core and F(0) containing the membrane proton channel, linked together by a central stalk and a peripheral stalk. During catalysis, ATP synthesis in the catalytic domain of F(1) is coupled via a rotary mechanism of the central stalk subunits to proton translocation. In terms of biological role, component of the F(0) channel, it forms part of the peripheral stalk, linking F(1) to F(0). The polypeptide is ATP synthase subunit b (Legionella pneumophila (strain Paris)).